Reading from the N-terminus, the 219-residue chain is Ras-like protein 1 (219 aa).

15–22 (GDGGVGKS) provides a ligand contact to GTP. Positions 37-45 (YDPTIEDSY) match the Effector region motif. GTP is bound by residues 62 to 66 (DTAGQ) and 121 to 124 (NKCD). Cys216 bears the Cysteine methyl ester mark. A lipid anchor (S-farnesyl cysteine) is attached at Cys216. The propeptide at 217–219 (VIC) is removed in mature form.

This sequence belongs to the small GTPase superfamily. Ras family. In terms of assembly, scd1, scd2, cdc42, and ras1, in its GTP-bound state, act cooperatively to form a protein complex. Post-translationally, palmitoylated by the erf2-erf4 complex.

It is found in the cell membrane. The catalysed reaction is GTP + H2O = GDP + phosphate + H(+). Alternates between an inactive form bound to GDP and an active form bound to GTP. Activated by a guanine nucleotide-exchange factor (GEF) and inactivated by a GTPase-activating protein (GAP). In terms of biological role, participates in the process of sexual differentiation and the determination of cell shape. Essential for mating and for recognition of the mating pheromone, but not for vegetative growth. Does not regulate the intracellular cAMP level. Regulates two downstream pathways, namely the byr2/byr1/spk1 mitogen-activated protein kinase cascade and the cdc42 small G protein pathway. The former is relevant to mating and sporulation, whereas the latter is relevant to mating, cell growth and cell morphology. The polypeptide is Ras-like protein 1 (ras1) (Schizosaccharomyces pombe (strain 972 / ATCC 24843) (Fission yeast)).